We begin with the raw amino-acid sequence, 706 residues long: Translation factor GUF1 homolog, mitochondrial (706 aa).

The 184-residue stretch at 89-272 (SRIRNFSIIA…SIVKNVPPPQ (184 aa)) folds into the tr-type G domain. GTP is bound by residues 98–105 (AHIDHGKS), 165–169 (DTPGH), and 219–222 (NKID).

The protein belongs to the TRAFAC class translation factor GTPase superfamily. Classic translation factor GTPase family. LepA subfamily.

The protein resides in the mitochondrion inner membrane. The enzyme catalyses GTP + H2O = GDP + phosphate + H(+). In terms of biological role, promotes mitochondrial protein synthesis. May act as a fidelity factor of the translation reaction, by catalyzing a one-codon backward translocation of tRNAs on improperly translocated ribosomes. Binds to mitochondrial ribosomes in a GTP-dependent manner. This is Translation factor GUF1 homolog, mitochondrial from Thalassiosira pseudonana (Marine diatom).